Reading from the N-terminus, the 293-residue chain is Elongation factor Ts (293 aa).

Residues 80–83 form an involved in Mg(2+) ion dislocation from EF-Tu region; sequence TDFV.

Belongs to the EF-Ts family.

It localises to the cytoplasm. In terms of biological role, associates with the EF-Tu.GDP complex and induces the exchange of GDP to GTP. It remains bound to the aminoacyl-tRNA.EF-Tu.GTP complex up to the GTP hydrolysis stage on the ribosome. The chain is Elongation factor Ts from Herminiimonas arsenicoxydans.